The chain runs to 131 residues: Small ribosomal subunit protein uS8 (131 aa).

It belongs to the universal ribosomal protein uS8 family. In terms of assembly, part of the 30S ribosomal subunit. Contacts proteins S5 and S12.

Functionally, one of the primary rRNA binding proteins, it binds directly to 16S rRNA central domain where it helps coordinate assembly of the platform of the 30S subunit. This is Small ribosomal subunit protein uS8 from Campylobacter jejuni subsp. doylei (strain ATCC BAA-1458 / RM4099 / 269.97).